The following is a 908-amino-acid chain: NADH-quinone oxidoreductase subunit G (908 aa).

In terms of domain architecture, 2Fe-2S ferredoxin-type spans 2–83 (ATIHVDGKEY…GTFISIDDEE (82 aa)). [2Fe-2S] cluster-binding residues include cysteine 34, cysteine 45, cysteine 48, and cysteine 67. In terms of domain architecture, 4Fe-4S His(Cys)3-ligated-type spans 83–122 (EAKQFRESVVEWLMTNHPHDCPVCEEGGNCHLQDMTVMTG). 12 residues coordinate [4Fe-4S] cluster: histidine 99, cysteine 103, cysteine 106, cysteine 112, cysteine 151, cysteine 154, cysteine 157, cysteine 201, cysteine 228, cysteine 231, cysteine 235, and cysteine 263. A 4Fe-4S Mo/W bis-MGD-type domain is found at 221 to 277 (MQFAPSICQQCSIGCNISPGERYGELRRIENRYNGTVNHYFLCDRGRFGYGYVNLKD).

It belongs to the complex I 75 kDa subunit family. In terms of assembly, composed of 13 different subunits. Subunits NuoCD, E, F, and G constitute the peripheral sector of the complex. It depends on [2Fe-2S] cluster as a cofactor. The cofactor is [4Fe-4S] cluster.

It catalyses the reaction a quinone + NADH + 5 H(+)(in) = a quinol + NAD(+) + 4 H(+)(out). Its function is as follows. NDH-1 shuttles electrons from NADH, via FMN and iron-sulfur (Fe-S) centers, to quinones in the respiratory chain. The immediate electron acceptor for the enzyme in this species is believed to be ubiquinone. Couples the redox reaction to proton translocation (for every two electrons transferred, four hydrogen ions are translocated across the cytoplasmic membrane), and thus conserves the redox energy in a proton gradient. This is NADH-quinone oxidoreductase subunit G (nuoG) from Salmonella typhi.